A 320-amino-acid polypeptide reads, in one-letter code: L-lactate dehydrogenase (320 aa).

NAD(+) is bound by residues 15–16 (FV), aspartate 37, lysine 42, tyrosine 68, and 82–83 (GA). Residues glutamine 85, arginine 91, and 123-126 (NPVD) contribute to the substrate site. NAD(+) is bound by residues 121 to 123 (ATN) and serine 146. 151–154 (DSAR) contributes to the substrate binding site. Residues arginine 156 and 168 to 172 (QNVHA) each bind beta-D-fructose 1,6-bisphosphate. Histidine 178 functions as the Proton acceptor in the catalytic mechanism. Phosphotyrosine is present on tyrosine 223. Residue threonine 232 participates in substrate binding.

Belongs to the LDH/MDH superfamily. LDH family. As to quaternary structure, homotetramer.

The protein resides in the cytoplasm. The enzyme catalyses (S)-lactate + NAD(+) = pyruvate + NADH + H(+). Its pathway is fermentation; pyruvate fermentation to lactate; (S)-lactate from pyruvate: step 1/1. With respect to regulation, allosterically activated by fructose 1,6-bisphosphate (FBP). Its function is as follows. Catalyzes the conversion of lactate to pyruvate. This is L-lactate dehydrogenase from Bacillus subtilis (strain 168).